The primary structure comprises 321 residues: Mas-related G-protein coupled receptor member D (321 aa).

Topologically, residues 1-8 (MNSTLDSS) are extracellular. Asn-2 is a glycosylation site (N-linked (GlcNAc...) asparagine). Residues 9-29 (PAPGLTISPTMDLVTWIYFSV) form a helical membrane-spanning segment. Thr-30 is a topological domain (cytoplasmic). Residues 31–51 (FLAMATCVGGMAGNSLVIWLL) form a helical membrane-spanning segment. Residues 52–72 (SCNGMQRSPFCVYVLNLAVAD) lie on the Extracellular side of the membrane. Residues 73-93 (FLFLFCMASMLSLETGPLLIV) form a helical membrane-spanning segment. Residues 94–146 (NISAKIYEGMRRIKYFAYTAGLSLLTAISTQRCLSVLFPIWYKCHRPRHLSSV) are Cytoplasmic-facing. The helical transmembrane segment at 147-167 (VSGALWALAFLMNFLASFFCV) threads the bilayer. At 168-181 (QFWHPNKHQCFKVD) the chain is on the extracellular side. Residues 182–202 (IVFNSLILGIFMPVMILTSTI) traverse the membrane as a helical segment. The Cytoplasmic portion of the chain corresponds to 203–220 (LFIRVRKNSLMQRRRPRR). A helical membrane pass occupies residues 221–241 (LYVVILTSILVFLTCSLPLGI). The Extracellular portion of the chain corresponds to 242 to 260 (NWFLLYWVDVKRDVRLLYS). The helical transmembrane segment at 261–281 (CVSRFSSSLSSSANPVIYFLV) threads the bilayer. Over 282-321 (GSQKSHRLQESLGAVLGRALRDEPEPEGRETPSTCTNDGV) the chain is Cytoplasmic. The segment covering 302-311 (RDEPEPEGRE) has biased composition (basic and acidic residues). Positions 302–321 (RDEPEPEGRETPSTCTNDGV) are disordered. A compositionally biased stretch (polar residues) spans 312–321 (TPSTCTNDGV).

It belongs to the G-protein coupled receptor 1 family. Mas subfamily. In terms of tissue distribution, expressed in a subset of sensory neurons that includes nociceptors. Expressed in the subclass of non-peptidergic sensory neurons that are IB4(+) and VR1(-).

It localises to the cell membrane. Its function is as follows. May regulate nociceptor function and/or development, including the sensation or modulation of pain. Functions as a specific membrane receptor for beta-alanine. The receptor couples with G-protein G(q) and G(i). In Mus musculus (Mouse), this protein is Mas-related G-protein coupled receptor member D (Mrgprd).